The following is a 125-amino-acid chain: Glycine cleavage system H protein (125 aa).

Positions valine 22 to lysine 104 constitute a Lipoyl-binding domain. Position 63 is an N6-lipoyllysine (lysine 63).

The protein belongs to the GcvH family. In terms of assembly, the glycine cleavage system is composed of four proteins: P, T, L and H. (R)-lipoate serves as cofactor.

Its function is as follows. The glycine cleavage system catalyzes the degradation of glycine. The H protein shuttles the methylamine group of glycine from the P protein to the T protein. This Brucella abortus (strain 2308) protein is Glycine cleavage system H protein.